A 317-amino-acid chain; its full sequence is Methionyl-tRNA formyltransferase (317 aa).

113-116 (SLLP) contacts (6S)-5,6,7,8-tetrahydrofolate.

It belongs to the Fmt family.

The enzyme catalyses L-methionyl-tRNA(fMet) + (6R)-10-formyltetrahydrofolate = N-formyl-L-methionyl-tRNA(fMet) + (6S)-5,6,7,8-tetrahydrofolate + H(+). Attaches a formyl group to the free amino group of methionyl-tRNA(fMet). The formyl group appears to play a dual role in the initiator identity of N-formylmethionyl-tRNA by promoting its recognition by IF2 and preventing the misappropriation of this tRNA by the elongation apparatus. In Pseudomonas fluorescens (strain SBW25), this protein is Methionyl-tRNA formyltransferase.